The sequence spans 167 residues: uncharacterized protein (167 aa).

To A.aeolicus aq_328.

This is an uncharacterized protein from Aquifex aeolicus (strain VF5).